Reading from the N-terminus, the 825-residue chain is Extracellular exo-alpha-L-arabinofuranosidase (825 aa).

The first 29 residues, 1 to 29 (MSRIRWRYGTAATALLVAAGLVPTATAHA), serve as a signal peptide directing secretion. Glutamate 58 contributes to the alpha-L-arabinofuranose binding site. The region spanning 70 to 215 (AELVQNRSFE…ALDMVSLFPR (146 aa)) is the CBM-cenC domain. Residues cysteine 247 and 379–380 (NE) each bind alpha-L-arabinofuranose. The active-site Proton donor/acceptor is glutamate 380.

It belongs to the glycosyl hydrolase 51 family.

The protein resides in the secreted. The enzyme catalyses Hydrolysis of terminal non-reducing alpha-L-arabinofuranoside residues in alpha-L-arabinosides.. Functionally, involved in the degradation of arabinan and is a key enzyme in the complete degradation of the plant cell wall. Catalyzes the cleavage of terminal alpha-L-arabinofuranosyl residues of arabinan present in the arabinofuranosyl polysaccharides or oligosaccharides. It cannot act on other arabinose-containing polysaccharides and arabinoxylo-oligosaccharides. It leaves most of the polymer intact, including most of the main-chain residues and the arabinose side chains. It acts preferentially on the linear alpha-(1-&gt;2)-linked arabinofuranobiosides and alpha-(1-&gt;3)-linked arabinofuranobiosides, and is much less effective on alpha-(1-&gt;5)-linked arabinofuranobiosides. It also hydrolyzes the terminal alpha-(1-&gt;3)-linked arabinofuranotriosides in preference to the alpha-(1-&gt;5)-linked arabinofuranotriosides. This Streptomyces chartreusis protein is Extracellular exo-alpha-L-arabinofuranosidase.